The following is a 190-amino-acid chain: Dense granule protein 1 (190 aa).

The N-terminal stretch at 1-24 is a signal peptide; that stretch reads MVRVSAIVGAAASVFVCLSAGAYA. Asn-30 carries N-linked (GlcNAc...) asparagine glycosylation.

The protein resides in the secreted. This chain is Dense granule protein 1 (GRA1), found in Toxoplasma gondii.